The sequence spans 562 residues: NAD-dependent malic enzyme (562 aa).

The active-site Proton donor is the Y101. NAD(+) is bound at residue R154. Catalysis depends on K172, which acts as the Proton acceptor. A divalent metal cation is bound by residues E243, D244, and D267. The NAD(+) site is built by D267 and N415.

This sequence belongs to the malic enzymes family. As to quaternary structure, homotetramer. Mg(2+) is required as a cofactor. It depends on Mn(2+) as a cofactor.

The enzyme catalyses (S)-malate + NAD(+) = pyruvate + CO2 + NADH. It carries out the reaction oxaloacetate + H(+) = pyruvate + CO2. In Aliivibrio salmonicida (strain LFI1238) (Vibrio salmonicida (strain LFI1238)), this protein is NAD-dependent malic enzyme.